The following is a 204-amino-acid chain: Large ribosomal subunit protein bL25 (204 aa).

This sequence belongs to the bacterial ribosomal protein bL25 family. CTC subfamily. Part of the 50S ribosomal subunit; part of the 5S rRNA/L5/L18/L25 subcomplex. Contacts the 5S rRNA. Binds to the 5S rRNA independently of L5 and L18.

Its function is as follows. This is one of the proteins that binds to the 5S RNA in the ribosome where it forms part of the central protuberance. This chain is Large ribosomal subunit protein bL25, found in Pseudomonas paraeruginosa (strain DSM 24068 / PA7) (Pseudomonas aeruginosa (strain PA7)).